Consider the following 213-residue polypeptide: Probable chemoreceptor glutamine deamidase CheD (213 aa).

Residues 1–12 show a composition bias toward basic residues; sequence MNRHRPHSHRSK. Residues 1–25 form a disordered region; sequence MNRHRPHSHRSKPASTQDQPDSVRR.

Belongs to the CheD family.

It carries out the reaction L-glutaminyl-[protein] + H2O = L-glutamyl-[protein] + NH4(+). In terms of biological role, probably deamidates glutamine residues to glutamate on methyl-accepting chemotaxis receptors (MCPs), playing an important role in chemotaxis. The chain is Probable chemoreceptor glutamine deamidase CheD from Rhodopseudomonas palustris (strain BisA53).